The primary structure comprises 49 residues: MAQSSSAPLQALNVRVYPIFTVRWLAVHVLGVPTVFFLGAITAMQLIRR.

Residues 24 to 40 traverse the membrane as a helical segment; the sequence is WLAVHVLGVPTVFFLGA. Residue His-28 coordinates heme.

The protein belongs to the PsbE/PsbF family. Heterodimer of an alpha subunit and a beta subunit. PSII is composed of 1 copy each of membrane proteins PsbA, PsbB, PsbC, PsbD, PsbE, PsbF, PsbH, PsbI, PsbJ, PsbK, PsbL, PsbM, PsbT, PsbX, PsbY, Psb30/Ycf12, peripheral proteins PsbO, CyanoQ (PsbQ), PsbU, PsbV and a large number of cofactors. It forms dimeric complexes. It depends on heme b as a cofactor.

The protein localises to the cellular thylakoid membrane. In terms of biological role, this b-type cytochrome is tightly associated with the reaction center of photosystem II (PSII). PSII is a light-driven water:plastoquinone oxidoreductase that uses light energy to abstract electrons from H(2)O, generating O(2) and a proton gradient subsequently used for ATP formation. It consists of a core antenna complex that captures photons, and an electron transfer chain that converts photonic excitation into a charge separation. The chain is Cytochrome b559 subunit beta from Prochlorococcus marinus (strain MIT 9303).